Reading from the N-terminus, the 199-residue chain is Pyridoxine/pyridoxamine 5'-phosphate oxidase (199 aa).

Residues 44 to 49 (RTVLLK), 59 to 60 (YT), Lys-66, and Gln-91 each bind FMN. Lys-49 is a binding site for substrate. Positions 109, 113, and 117 each coordinate substrate. Residues 126-127 (QS) and Trp-171 each bind FMN. Residue 177 to 179 (RLH) coordinates substrate. Arg-181 serves as a coordination point for FMN.

This sequence belongs to the pyridoxamine 5'-phosphate oxidase family. As to quaternary structure, homodimer. It depends on FMN as a cofactor.

The enzyme catalyses pyridoxamine 5'-phosphate + O2 + H2O = pyridoxal 5'-phosphate + H2O2 + NH4(+). It carries out the reaction pyridoxine 5'-phosphate + O2 = pyridoxal 5'-phosphate + H2O2. The protein operates within cofactor metabolism; pyridoxal 5'-phosphate salvage; pyridoxal 5'-phosphate from pyridoxamine 5'-phosphate: step 1/1. Its pathway is cofactor metabolism; pyridoxal 5'-phosphate salvage; pyridoxal 5'-phosphate from pyridoxine 5'-phosphate: step 1/1. Catalyzes the oxidation of either pyridoxine 5'-phosphate (PNP) or pyridoxamine 5'-phosphate (PMP) into pyridoxal 5'-phosphate (PLP). This is Pyridoxine/pyridoxamine 5'-phosphate oxidase from Xanthomonas campestris pv. campestris (strain 8004).